A 140-amino-acid chain; its full sequence is MLLHIIARGKIARSPEEELVTRYEKRLTWPVKLTELPETGGRIPDPQTPFKTVLLDERGKDLSSHRLARQLERWRDDGMRETRFVLGAADGHAQEERAEADLLLAFGSATWPHLLARAMLMEQLYRATSILAGHPYHRAG.

Residues L55 and G87 each contribute to the S-adenosyl-L-methionine site.

Belongs to the RNA methyltransferase RlmH family. Homodimer.

The protein localises to the cytoplasm. The catalysed reaction is pseudouridine(1915) in 23S rRNA + S-adenosyl-L-methionine = N(3)-methylpseudouridine(1915) in 23S rRNA + S-adenosyl-L-homocysteine + H(+). Functionally, specifically methylates the pseudouridine at position 1915 (m3Psi1915) in 23S rRNA. The chain is Ribosomal RNA large subunit methyltransferase H from Erythrobacter litoralis (strain HTCC2594).